We begin with the raw amino-acid sequence, 63 residues long: Large ribosomal subunit protein bL32 (63 aa).

Residues 1–45 form a disordered region; the sequence is MAVQQNKKSRSRRDMRRSHDALTKPTLSVDPTTGETHLRHHMTPD. A compositionally biased stretch (basic residues) spans 7–16; sequence KKSRSRRDMR. A compositionally biased stretch (polar residues) spans 25-35; the sequence is PTLSVDPTTGE.

It belongs to the bacterial ribosomal protein bL32 family.

The polypeptide is Large ribosomal subunit protein bL32 (Legionella pneumophila (strain Paris)).